Consider the following 100-residue polypeptide: Nucleoid-associated protein ckrop_0143 (100 aa).

This sequence belongs to the YbaB/EbfC family. In terms of assembly, homodimer.

The protein localises to the cytoplasm. The protein resides in the nucleoid. Binds to DNA and alters its conformation. May be involved in regulation of gene expression, nucleoid organization and DNA protection. The polypeptide is Nucleoid-associated protein ckrop_0143 (Corynebacterium kroppenstedtii (strain DSM 44385 / JCM 11950 / CIP 105744 / CCUG 35717)).